Here is a 216-residue protein sequence, read N- to C-terminus: Cytochrome c biogenesis ATP-binding export protein CcmA (216 aa).

The ABC transporter domain maps to 11–216 (VSASKLTCIR…RKIRLDYRFV (206 aa)). ATP is bound at residue 43–50 (GPNGAGKT).

The protein belongs to the ABC transporter superfamily. CcmA exporter (TC 3.A.1.107) family. The complex is composed of two ATP-binding proteins (CcmA) and two transmembrane proteins (CcmB).

Its subcellular location is the cell inner membrane. The enzyme catalyses heme b(in) + ATP + H2O = heme b(out) + ADP + phosphate + H(+). Its function is as follows. Part of the ABC transporter complex CcmAB involved in the biogenesis of c-type cytochromes; once thought to export heme, this seems not to be the case, but its exact role is uncertain. Responsible for energy coupling to the transport system. The chain is Cytochrome c biogenesis ATP-binding export protein CcmA from Shewanella sp. (strain MR-7).